Here is a 403-residue protein sequence, read N- to C-terminus: Ribose-phosphate pyrophosphokinase 1, chloroplastic (403 aa).

A chloroplast-targeting transit peptide spans 1–49; the sequence is MASLGLSFPPAAKTPTYLASSSSTFFSNSSLSVRTSQFRSRNSVFACVK. Residues Asp-217, His-219, Asp-228, and Asp-232 each coordinate Mg(2+). The interval 303-318 is binding of phosphoribosylpyrophosphate; it reads GKVAIMVDDMIDTAGT.

Belongs to the ribose-phosphate pyrophosphokinase family. Requires Mg(2+) as cofactor.

The protein localises to the plastid. It is found in the chloroplast. The enzyme catalyses D-ribose 5-phosphate + ATP = 5-phospho-alpha-D-ribose 1-diphosphate + AMP + H(+). The polypeptide is Ribose-phosphate pyrophosphokinase 1, chloroplastic (PRS1) (Arabidopsis thaliana (Mouse-ear cress)).